Consider the following 216-residue polypeptide: Octanoyltransferase (216 aa).

The 176-residue stretch at 32-207 (SDSQDELWIV…TFSQIMGYQQ (176 aa)) folds into the BPL/LPL catalytic domain. Substrate contacts are provided by residues 71 to 78 (RGGQVTYH), 138 to 140 (SLG), and 151 to 153 (GLA). C169 functions as the Acyl-thioester intermediate in the catalytic mechanism.

The protein belongs to the LipB family.

Its subcellular location is the cytoplasm. It carries out the reaction octanoyl-[ACP] + L-lysyl-[protein] = N(6)-octanoyl-L-lysyl-[protein] + holo-[ACP] + H(+). It functions in the pathway protein modification; protein lipoylation via endogenous pathway; protein N(6)-(lipoyl)lysine from octanoyl-[acyl-carrier-protein]: step 1/2. Catalyzes the transfer of endogenously produced octanoic acid from octanoyl-acyl-carrier-protein onto the lipoyl domains of lipoate-dependent enzymes. Lipoyl-ACP can also act as a substrate although octanoyl-ACP is likely to be the physiological substrate. The sequence is that of Octanoyltransferase from Shewanella frigidimarina (strain NCIMB 400).